A 718-amino-acid chain; its full sequence is MEEFDRSISFDGRDIRLKLGLLAPQAGGSVLIQSGDTAVLVTATKAASREGVDFLPLTVDYEERLYAAGRIPGGFLRREGRPPEKAILISRLIDRPLRPLFPHWLRDDIQVIATTLSMDEEVPPDVLAVTGASLAVILAEIPFFGPMAAVRVGLVGDDFIINPTYKEINTGDLDLVVAGSPDGVVMVEAGANQLPEQDIIEAIDFGYEAVRDLIAAQQDVMETLGVKLATLDPPPVNESVLEFIKTQTADEIKKVLSQYDLDKNGRDTALDEIKAAKVEEVIASLPEEDPIKVATTEEAKLVDTLFKDVTKKLMRSQIINEGVRVDGRQLDQVRPISCRVGLLPPRVHGSGLFCRGLTQVLSIATLGTPGDAQELADDLHPEDEKRYLHHYNFPPYSVGETRPMRSPGRREIGHGALAERAILPVLPTQQEFPYVVRVVSEVLSSNGSTSMGSVCGSTLALMDAGVPIIKPVSGAAMGLIKDGDEVRILTDIQGIEDFLGDMDFKVAGTDNGITALQMDMKITGLSMDIVAKAIEQARPARLHILDKMLSVIDSPRPELSPYAPRLLTMRIDPDMIGLVIGPGGKTVKSITEQTKTKIDIDDDGTVTISASEAEQAERAKQLIHNMTRKLNEGEVYVGRVTRIIQIGAFVEIMPGKEGMIHISQLAEGRVGKVEDELAVGDEVVVKVREIDNKGRLNLTRLGIHPDEAAAARKAAALL.

Mg(2+)-binding residues include Asp-497 and Asp-503. In terms of domain architecture, KH spans 564–623 (PRLLTMRIDPDMIGLVIGPGGKTVKSITEQTKTKIDIDDDGTVTISASEAEQAERAKQLI). The region spanning 633–701 (GEVYVGRVTR…NKGRLNLTRL (69 aa)) is the S1 motif domain.

The protein belongs to the polyribonucleotide nucleotidyltransferase family. Mg(2+) is required as a cofactor.

It localises to the cytoplasm. It catalyses the reaction RNA(n+1) + phosphate = RNA(n) + a ribonucleoside 5'-diphosphate. Functionally, involved in mRNA degradation. Catalyzes the phosphorolysis of single-stranded polyribonucleotides processively in the 3'- to 5'-direction. This Gloeothece citriformis (strain PCC 7424) (Cyanothece sp. (strain PCC 7424)) protein is Polyribonucleotide nucleotidyltransferase.